We begin with the raw amino-acid sequence, 174 residues long: Peptide methionine sulfoxide reductase MsrA (174 aa).

The active site involves Cys10.

This sequence belongs to the MsrA Met sulfoxide reductase family.

The enzyme catalyses L-methionyl-[protein] + [thioredoxin]-disulfide + H2O = L-methionyl-(S)-S-oxide-[protein] + [thioredoxin]-dithiol. It carries out the reaction [thioredoxin]-disulfide + L-methionine + H2O = L-methionine (S)-S-oxide + [thioredoxin]-dithiol. In terms of biological role, has an important function as a repair enzyme for proteins that have been inactivated by oxidation. Catalyzes the reversible oxidation-reduction of methionine sulfoxide in proteins to methionine. This is Peptide methionine sulfoxide reductase MsrA from Acinetobacter baumannii (strain SDF).